The primary structure comprises 100 residues: MTDDELPKTVFDDLFSVIESRRETLPDDSYTASLFAHEKGENAALEKLGEEATETILAAKDSDSAAIQAESADLIYHLFVVLAMEEITLDDLREELHGRL.

It belongs to the PRA-PH family.

It is found in the cytoplasm. It catalyses the reaction 1-(5-phospho-beta-D-ribosyl)-ATP + H2O = 1-(5-phospho-beta-D-ribosyl)-5'-AMP + diphosphate + H(+). Its pathway is amino-acid biosynthesis; L-histidine biosynthesis; L-histidine from 5-phospho-alpha-D-ribose 1-diphosphate: step 2/9. This chain is Phosphoribosyl-ATP pyrophosphatase, found in Haloquadratum walsbyi (strain DSM 16790 / HBSQ001).